The following is a 294-amino-acid chain: Zinc finger protein 346 (294 aa).

Residue M1 is modified to N-acetylmethionine. Low complexity predominate over residues M1–P19. The interval M1–R35 is disordered. The segment covering G22–R35 has biased composition (basic and acidic residues). The Matrin-type 1 zinc finger occupies F70–Y104. C75, C78, H91, and H97 together coordinate Zn(2+). K114 participates in a covalent cross-link: Glycyl lysine isopeptide (Lys-Gly) (interchain with G-Cter in SUMO2). The segment at D131–K165 adopts a Matrin-type 2 zinc-finger fold. Positions 136, 139, 152, and 158 each coordinate Zn(2+). K170 participates in a covalent cross-link: Glycyl lysine isopeptide (Lys-Gly) (interchain with G-Cter in SUMO2). 2 Matrin-type zinc fingers span residues D182–L216 and G236–T270. A disordered region spans residues K269–D294.

As to quaternary structure, forms a heteromeric complex with XPO5 and ILF3. Found in a nuclear export complex with XPO5, RAN, ILF3, ZNF346 and double-stranded RNA. Interacts with XPO5. Interacts with ILF3 in an RNA-independent manner. As to expression, expressed in all tissues tested, including heart, brain, spleen, lung, liver, muscle, kidney and testis. Exogenous expression induced apoptosis.

It is found in the nucleus. It localises to the nucleolus. Its subcellular location is the cytoplasm. Its function is as follows. Binds with low affinity to dsDNA and ssRNA, and with high affinity to dsRNA, with no detectable sequence specificity. May bind to specific miRNA hairpins. The protein is Zinc finger protein 346 (Znf346) of Mus musculus (Mouse).